Reading from the N-terminus, the 1349-residue chain is Periaxin (1349 aa).

The residue at position 7 (Ser-7) is a Phosphoserine. The 84-residue stretch at 16–99 (LVEIIVETEA…YKVSFCLKRT (84 aa)) folds into the PDZ domain. The Nuclear export signal signature appears at 70-84 (VFFENFKYEDALRLL). Residue Ser-133 is modified to Phosphoserine. Repeat copies occupy residues 402-406 (PPEVK), 410-414 (GPEVK), 418-422 (VPEVK), 426-430 (MPEPV), 431-435 (LPEVR), 436-440 (LPEVE), 444-448 (VSEMK), 452-456 (VPEMA), 457-461 (VPEVR), 462-466 (LPEVQ), 467-471 (LPKVP), 472-476 (EMKLP), 477-481 (EVKLP), 485-489 (EMAVP), 493-497 (LPEVQ), 501-505 (VPEMK), 506-510 (LPEVK), 514-518 (VPEMA), 519-523 (VPEVR), 524-528 (LPEVQ), 532-536 (VPEMK), 537-549 (LPKVPEMKCPEMK), 553-557 (VPEMA), 558-562 (VPEVR), 563-567 (LPEVQ), 571-575 (VPEVK), 576-580 (LPEVK), 589-593 (VPEMA), 594-598 (VPEVH), 599-603 (LPEVQ), 612-616 (VPDVK), 617-621 (LPEVK), 622-626 (LPEIK), 630-634 (VPEMV), 635-639 (VPDVH), 643-647 (VHLPK), 648-652 (VSEMR), 653-657 (LPEVQ), 661-665 (VPEVH), 669-673 (APEVK), and 674-678 (LPKAP). A 41 X 5 AA approximate tandem repeats of [LVMGIE]-[PSM]-[EDKA]-[LIVMA]-[AQKHPRT]; that may have a tripeptide spacer of [ALKD]-[IPV]-[KPH] region spans residues 402-678 (PPEVKVPKGP…APEVKLPKAP (277 aa)). 2 positions are modified to phosphoserine: Ser-794 and Ser-974. A compositionally biased stretch (basic and acidic residues) spans 1207-1218 (AKEGAEEGEKAK). A disordered region spans residues 1207–1349 (AKEGAEEGEK…RMEGAQAAVI (143 aa)). The span at 1232-1242 (SEAVSGEGSPS) shows a compositional bias: low complexity. Ser-1236, Ser-1240, Ser-1242, Ser-1289, Ser-1295, and Ser-1327 each carry phosphoserine.

Belongs to the periaxin family. Homodimer (via PDZ domain). Interacts with SCN10A. Found in a complex with SCN10A. Interacts with DRP2. Identified in a dystroglycan complex that contains at least PRX, DRP2, UTRN, DMD and DAG1. Detected in a complex composed of at least EZR, AHNAK, PPL and PRX. Identified in a complex with EZR, AHNAK, BFSP1, BFSP2, ANK2, PLEC, VIM and spectrin. Detected in eye lens (at protein level).

The protein resides in the nucleus. It is found in the cytoplasm. Its subcellular location is the cell membrane. It localises to the cell junction. The protein localises to the adherens junction. Functionally, scaffolding protein that functions as part of a dystroglycan complex in Schwann cells, and as part of EZR and AHNAK-containing complexes in eye lens fiber cells. Required for the maintenance of the peripheral myelin sheath that is essential for normal transmission of nerve impulses and normal perception of sensory stimuli. Required for normal transport of MBP mRNA from the perinuclear to the paranodal regions. Required for normal remyelination after nerve injury. Required for normal elongation of Schwann cells and normal length of the internodes between the nodes of Ranvier. The demyelinated nodes of Ranvier permit saltatory transmission of nerve impulses; shorter internodes cause slower transmission of nerve impulses. Required for the formation of appositions between the abaxonal surface of the myelin sheath and the Schwann cell plasma membrane; the Schwann cell cytoplasm is restricted to regions between these appositions. Required for the formation of Cajal bands and of Schmidt-Lanterman incisures that correspond to short, cytoplasm-filled regions on myelinated nerves. Recruits DRP2 to the Schwann cell plasma membrane. Required for normal protein composition of the eye lens fiber cell plasma membrane and normal eye lens fiber cell morphology. The polypeptide is Periaxin (PRX) (Bos taurus (Bovine)).